We begin with the raw amino-acid sequence, 871 residues long: MAQMHTPMMKQYLQIKAKYQDAFLFFRLGDFYEMFNEDAIKAAQELEITLTGRGQGEDRIPMCGVPYHSADSYIARLIDKGYKIAICEQVEDPKTAKGVVKREVTKVLTPGTLMNSKLLAEKENNYLLAFASEGEDGWGIARCDLSTGESDVTLIRGGSAELLQEIAASGVKEAIAPAGLEEELKAKLGEQQGFVVSYEEQEDVPKEYERLINHIQQPLLKRAYGRMLHYLLATQKQSLRHLQQVVFHPADSYLKMDVHAKRNLELVQTLRDKKKSGSLLAVIDQTVTAMGGRLLRQWIERPLVDRKAIAGRQAVVEAFLEHFFEREQLRDCLRQVYDIERLAARIAYGSVNARELVQLKRSLQNIPEIEATLEQVGLGGRWLNQSEQFADLVALMEQSLVDDPPLSLTEGGLIVDGYNEELDAYRDASRNGKQWIAELEQSEREATGIRSLKVGYNRVFGYYIEVTRANAHLLPDGRYERKQTLTNAERYITPELKEKEALILEADEKLADLEYRLFADIRKQVEAYVASLQKLAADISEMDVLAGFASVAEQNGYTKPTITESRDVAIKGGRHPVVETVIKRGSYVENDIDLTGDRDMLLITGPNMGGKSTYMRQLALTVVMAQIGSYVPAAEATLPLFDQIFTRIGAADDLASGQSTFMVEMLETKDALVKATPHSLILLDEIGRGTSTYDGMALAQAIIEYIYETIGAKTLFSTHYHELTRLADSLHTLRNVHVSAVEENGTVVFLHQVIEGAADRSYGVYVAELAGLPKQVTTRAEALLTELEHLPQRPTSASVEQPVDSAKTETAATAEEPQQLSLFPTDEETKPKQPTKKERSVLAKMAEVDVLHLTPLQALEKINEWQKQLNK.

605–612 is a binding site for ATP; that stretch reads GPNMGGKS. The disordered stretch occupies residues 791–840; the sequence is PQRPTSASVEQPVDSAKTETAATAEEPQQLSLFPTDEETKPKQPTKKERS. Residues 827–840 are compositionally biased toward basic and acidic residues; sequence EETKPKQPTKKERS.

This sequence belongs to the DNA mismatch repair MutS family.

This protein is involved in the repair of mismatches in DNA. It is possible that it carries out the mismatch recognition step. This protein has a weak ATPase activity. In Shouchella clausii (strain KSM-K16) (Alkalihalobacillus clausii), this protein is DNA mismatch repair protein MutS.